We begin with the raw amino-acid sequence, 208 residues long: Superoxide dismutase [Mn] (208 aa).

His-27, His-81, Asp-168, and His-172 together coordinate Mn(2+).

This sequence belongs to the iron/manganese superoxide dismutase family. Homodimer. Mn(2+) is required as a cofactor.

It catalyses the reaction 2 superoxide + 2 H(+) = H2O2 + O2. In terms of biological role, destroys superoxide anion radicals which are normally produced within the cells and which are toxic to biological systems. This Buchnera aphidicola subsp. Baizongia pistaciae (strain Bp) protein is Superoxide dismutase [Mn] (sodA).